A 569-amino-acid polypeptide reads, in one-letter code: Arginine--tRNA ligase (569 aa).

The 'HIGH' region motif lies at 123 to 133 (PNIAKRMHIGH).

The protein belongs to the class-I aminoacyl-tRNA synthetase family. In terms of assembly, monomer.

The protein localises to the cytoplasm. The enzyme catalyses tRNA(Arg) + L-arginine + ATP = L-arginyl-tRNA(Arg) + AMP + diphosphate. The polypeptide is Arginine--tRNA ligase (Fusobacterium nucleatum subsp. nucleatum (strain ATCC 25586 / DSM 15643 / BCRC 10681 / CIP 101130 / JCM 8532 / KCTC 2640 / LMG 13131 / VPI 4355)).